The chain runs to 279 residues: Phenylalanine 3-hydroxylase (279 aa).

His140, His145, and Glu186 together coordinate Fe cation.

It belongs to the biopterin-dependent aromatic amino acid hydroxylase family. Requires Fe(2+) as cofactor.

It catalyses the reaction (6R)-L-erythro-5,6,7,8-tetrahydrobiopterin + L-phenylalanine + O2 = 3-hydroxy-L-phenylalanine + (4aS,6R)-4a-hydroxy-L-erythro-5,6,7,8-tetrahydrobiopterin. Its function is as follows. In vitro, catalyzes the highly regiospecific C-3 hydroxylation of L-phenylalanine (L-Phe) to yield 3-hydroxy-L-phenylalanine (meta-Tyr), an amino acid found in bacterial secondary metabolites such as sanglifehrin A and some pacidamycins. Tetrahydrobiopterin (BH4) seems to be the physiological pterin, however the hydroxylase is also able to use 6-methyltetrahydropterin (6-MePH4). The polypeptide is Phenylalanine 3-hydroxylase (Streptomyces coeruleorubidus).